Consider the following 47-residue polypeptide: Delta-actitoxin-Axm1e (47 aa).

3 disulfide bridges follow: Cys4–Cys44, Cys6–Cys34, and Cys27–Cys45.

It belongs to the sea anemone sodium channel inhibitory toxin family. Type I subfamily.

It localises to the secreted. The protein resides in the nematocyst. Its function is as follows. Binds specifically to voltage-gated sodium channels (Nav), thereby delaying their inactivation. This toxin is active on a variety of voltage-gated sodium channels (Nav1.1/SCN1A, Nav1.2/SCN2A, Nav1.3/SCN3A, Nav1.4/SCN4A, Nav1.5/SCN5A and Nav1.6/SCN8A). The polypeptide is Delta-actitoxin-Axm1e (Anthopleura xanthogrammica (Giant green sea anemone)).